The primary structure comprises 130 residues: Small ribosomal subunit protein uS17m (130 aa).

The transit peptide at M1–T20 directs the protein to the mitochondrion.

It belongs to the universal ribosomal protein uS17 family. As to quaternary structure, component of the mitochondrial small ribosomal subunit (mt-SSU). Mature mammalian 55S mitochondrial ribosomes consist of a small (28S) and a large (39S) subunit. The 28S small subunit contains a 12S ribosomal RNA (12S mt-rRNA) and 30 different proteins. The 39S large subunit contains a 16S rRNA (16S mt-rRNA), a copy of mitochondrial valine transfer RNA (mt-tRNA(Val)), which plays an integral structural role, and 52 different proteins.

The protein localises to the mitochondrion. This Homo sapiens (Human) protein is Small ribosomal subunit protein uS17m (MRPS17).